The primary structure comprises 172 residues: Type IV secretion system putative outer membrane lipoprotein BRA0058/BS1330_II0058 (172 aa).

The N-terminal stretch at 1–15 (MRTLVMVACAVSLAA) is a signal peptide. Cysteine 16 carries the N-palmitoyl cysteine lipid modification. Cysteine 16 is lipidated: S-diacylglycerol cysteine. The OmpA-like domain occupies 58-172 (WPARPPKQTV…RRVDIEILRK (115 aa)).

The protein localises to the cell outer membrane. In terms of biological role, the VirB system could be required for the establishment of the replication niche in the host. The polypeptide is Type IV secretion system putative outer membrane lipoprotein BRA0058/BS1330_II0058 (Brucella suis biovar 1 (strain 1330)).